The chain runs to 337 residues: MIPLRLLFSTSYNPWFNLSLEEYIFKNMDQNQTILFLWRNQNTIVIGRSQNAWKECNTRRMNRDGVKLARRHSGGGAVFHDLGNTCFTFMSTQKNYNKNVSFKIILDGLNSLNISAKISGRNDLIINTNQGDRKISGSAYRQVSDRQLHHGTLLLNVDINKLSYYLNPDSKKLKSKGITSVNSRIINLNTLHANITHDLVCNQLKTAFFNYYQTTVESEIISIKNFNHIKDFSKQFNKQRSWQWNFGNTPSFSHYLDNRFNWGSVELHFDISHGMINRSHIFTDSLNPEPLEELSKKLIGISYNAVTIQHCCQEWTKNWPQFQELQEVTHWLITNVT.

One can recognise a BPL/LPL catalytic domain in the interval 29-216 (DQNQTILFLW…AFFNYYQTTV (188 aa)). Residues arginine 71, 76–79 (GAVF), and lysine 134 contribute to the ATP site. Lysine 134 serves as a coordination point for (R)-lipoate.

The protein belongs to the LplA family. In terms of assembly, monomer.

It is found in the cytoplasm. It carries out the reaction L-lysyl-[lipoyl-carrier protein] + (R)-lipoate + ATP = N(6)-[(R)-lipoyl]-L-lysyl-[lipoyl-carrier protein] + AMP + diphosphate + H(+). It participates in protein modification; protein lipoylation via exogenous pathway; protein N(6)-(lipoyl)lysine from lipoate: step 1/2. It functions in the pathway protein modification; protein lipoylation via exogenous pathway; protein N(6)-(lipoyl)lysine from lipoate: step 2/2. Functionally, catalyzes both the ATP-dependent activation of exogenously supplied lipoate to lipoyl-AMP and the transfer of the activated lipoyl onto the lipoyl domains of lipoate-dependent enzymes. This chain is Lipoate-protein ligase A, found in Blochmanniella floridana.